A 37-amino-acid polypeptide reads, in one-letter code: Delta-amaurobitoxin-Pl1b (37 aa).

Cystine bridges form between Cys2-Cys18, Cys9-Cys23, Cys17-Cys33, and Cys25-Cys31. Ser37 carries the serine amide modification.

The protein belongs to the neurotoxin 07 (Beta/delta-agtx) family. 02 (aga-3) subfamily. As to expression, expressed by the venom gland.

Its subcellular location is the secreted. Functionally, insecticidal toxin. Binds to site 4 of insect voltage-gated sodium channel (Nav) and inhibits channel inactivation. In vivo, it lethal to lepidopteran larvae. Has no adverse affects when intracerebroventricularly injected in mice at a dose of 0.2 ug, but causes reversible paralysis of legs when injected intracerebroventricularly in mice at a dose of 2.0 ug. The chain is Delta-amaurobitoxin-Pl1b from Pireneitega luctuosa (Tangled nest spider).